Reading from the N-terminus, the 593-residue chain is Probable serine/threonine-protein kinase fhkA (593 aa).

Residues 1 to 24 (MSQTNYIPSTPNKSTPPSELSSTP) are disordered. Positions 54–111 (ITIGRSKTCNIVVPELIVSGKHCIITRADAIENGNTNYGLLMIQDQSTNGTFINGKLI) constitute an FHA domain. A Protein kinase domain is found at 180–472 (YDFIKELGSG…VEQALNHPWI (293 aa)). Residues 186–194 (LGSGNFSVV) and Lys209 each bind ATP. Asp307 acts as the Proton acceptor in catalysis.

This sequence belongs to the protein kinase superfamily. CAMK Ser/Thr protein kinase family. CHK2 subfamily.

It carries out the reaction L-seryl-[protein] + ATP = O-phospho-L-seryl-[protein] + ADP + H(+). It catalyses the reaction L-threonyl-[protein] + ATP = O-phospho-L-threonyl-[protein] + ADP + H(+). This is Probable serine/threonine-protein kinase fhkA (fhkA) from Dictyostelium discoideum (Social amoeba).